The following is a 453-amino-acid chain: Chromosomal replication initiator protein DnaA (453 aa).

The tract at residues 1–73 (MNISPQYLWN…AQEVASVVGY (73 aa)) is domain I, interacts with DnaA modulators. The tract at residues 73-112 (YPVDIQLTTAEGETMAMTGEAQSYQEKSLTQIAPESPKLN) is domain II. The interval 113-329 (QLNPRYTFSR…GALIRAIAYT (217 aa)) is domain III, AAA+ region. Positions 157, 159, 160, and 161 each coordinate ATP. Residues 330–453 (SISGLSMTVQ…RINMASRTQS (124 aa)) form a domain IV, binds dsDNA region.

The protein belongs to the DnaA family. As to quaternary structure, oligomerizes as a right-handed, spiral filament on DNA at oriC.

It localises to the cytoplasm. Its function is as follows. Plays an essential role in the initiation and regulation of chromosomal replication. ATP-DnaA binds to the origin of replication (oriC) to initiate formation of the DNA replication initiation complex once per cell cycle. Binds the DnaA box (a 9 base pair repeat at the origin) and separates the double-stranded (ds)DNA. Forms a right-handed helical filament on oriC DNA; dsDNA binds to the exterior of the filament while single-stranded (ss)DNA is stabiized in the filament's interior. The ATP-DnaA-oriC complex binds and stabilizes one strand of the AT-rich DNA unwinding element (DUE), permitting loading of DNA polymerase. After initiation quickly degrades to an ADP-DnaA complex that is not apt for DNA replication. Binds acidic phospholipids. The polypeptide is Chromosomal replication initiator protein DnaA (Rippkaea orientalis (strain PCC 8801 / RF-1) (Cyanothece sp. (strain PCC 8801))).